The chain runs to 49 residues: Large ribosomal subunit protein bL33B (49 aa).

This sequence belongs to the bacterial ribosomal protein bL33 family.

The protein is Large ribosomal subunit protein bL33B of Bacillus velezensis (strain DSM 23117 / BGSC 10A6 / LMG 26770 / FZB42) (Bacillus amyloliquefaciens subsp. plantarum).